The following is a 440-amino-acid chain: 3-phosphoshikimate 1-carboxyvinyltransferase (440 aa).

Residues Lys-25, Ser-26, and Arg-30 each coordinate 3-phosphoshikimate. Lys-25 serves as a coordination point for phosphoenolpyruvate. Phosphoenolpyruvate is bound by residues Gly-96 and Arg-124. 3-phosphoshikimate-binding residues include Ser-168, Gln-169, Asp-310, and Lys-337. Gln-169 serves as a coordination point for phosphoenolpyruvate. Asp-310 serves as the catalytic Proton acceptor. Residues Arg-341, Arg-382, and Lys-409 each contribute to the phosphoenolpyruvate site.

The protein belongs to the EPSP synthase family. As to quaternary structure, monomer.

The protein resides in the cytoplasm. The enzyme catalyses 3-phosphoshikimate + phosphoenolpyruvate = 5-O-(1-carboxyvinyl)-3-phosphoshikimate + phosphate. Its pathway is metabolic intermediate biosynthesis; chorismate biosynthesis; chorismate from D-erythrose 4-phosphate and phosphoenolpyruvate: step 6/7. Catalyzes the transfer of the enolpyruvyl moiety of phosphoenolpyruvate (PEP) to the 5-hydroxyl of shikimate-3-phosphate (S3P) to produce enolpyruvyl shikimate-3-phosphate and inorganic phosphate. The chain is 3-phosphoshikimate 1-carboxyvinyltransferase from Chlamydia trachomatis serovar L2 (strain ATCC VR-902B / DSM 19102 / 434/Bu).